The sequence spans 513 residues: Histidine ammonia-lyase (513 aa).

The 5-imidazolinone (Ala-Gly) cross-link spans 142-144 (ASG). The residue at position 143 (Ser-143) is a 2,3-didehydroalanine (Ser).

The protein belongs to the PAL/histidase family. Contains an active site 4-methylidene-imidazol-5-one (MIO), which is formed autocatalytically by cyclization and dehydration of residues Ala-Ser-Gly.

It is found in the cytoplasm. It catalyses the reaction L-histidine = trans-urocanate + NH4(+). Its pathway is amino-acid degradation; L-histidine degradation into L-glutamate; N-formimidoyl-L-glutamate from L-histidine: step 1/3. The polypeptide is Histidine ammonia-lyase (Methylobacterium sp. (strain 4-46)).